Here is a 468-residue protein sequence, read N- to C-terminus: Argininosuccinate lyase (468 aa).

It belongs to the lyase 1 family. Argininosuccinate lyase subfamily.

It localises to the cytoplasm. The catalysed reaction is 2-(N(omega)-L-arginino)succinate = fumarate + L-arginine. It participates in amino-acid biosynthesis; L-arginine biosynthesis; L-arginine from L-ornithine and carbamoyl phosphate: step 3/3. This is Argininosuccinate lyase from Paraburkholderia phytofirmans (strain DSM 17436 / LMG 22146 / PsJN) (Burkholderia phytofirmans).